An 84-amino-acid polypeptide reads, in one-letter code: uncharacterized protein (84 aa).

The chain crosses the membrane as a helical span at residues 25 to 45 (ILMTVAGFIIAFAILVFQISF).

It is found in the membrane. This is an uncharacterized protein from Bacillus anthracis.